We begin with the raw amino-acid sequence, 255 residues long: Small ribosomal subunit protein eS1 (255 aa).

Over residues 1 to 18 (MAVGKNKRLSKGKKGLKK) the composition is skewed to basic residues. The segment at 1–28 (MAVGKNKRLSKGKKGLKKRTQDPFSRKD) is disordered. Alanine 2 is subject to N-acetylalanine; partial. Residues 19 to 28 (RTQDPFSRKD) are compositionally biased toward basic and acidic residues.

The protein belongs to the eukaryotic ribosomal protein eS1 family. Component of the small ribosomal subunit. Mature ribosomes consist of a small (40S) and a large (60S) subunit. The 40S subunit contains about 33 different proteins and 1 molecule of RNA (18S). The 60S subunit contains about 49 different proteins and 3 molecules of RNA (25S, 5.8S and 5S).

Its subcellular location is the cytoplasm. This Ajellomyces capsulatus (strain G186AR / H82 / ATCC MYA-2454 / RMSCC 2432) (Darling's disease fungus) protein is Small ribosomal subunit protein eS1.